A 102-amino-acid chain; its full sequence is Large ribosomal subunit protein bL36m (102 aa).

The protein belongs to the bacterial ribosomal protein bL36 family. As to quaternary structure, component of the mitochondrial ribosome large subunit (39S) which comprises a 16S rRNA and about 50 distinct proteins.

It localises to the mitochondrion. The sequence is that of Large ribosomal subunit protein bL36m (Mrpl36) from Mus musculus (Mouse).